Reading from the N-terminus, the 762-residue chain is Phospholipase D alpha 4 (762 aa).

The C2 domain occupies 1 to 116 (MELEEQKKYF…VINGFFPLIA (116 aa)). Residue D172 participates in Ca(2+) binding. The 39-residue stretch at 301–339 (TAFAHHQKTITLDTRVTNSSTKEREIMSFLGGFDLCDGR) folds into the PLD phosphodiesterase 1 domain. Catalysis depends on residues H306, K308, and D313. H306 provides a ligand contact to a 1,2-diacyl-sn-glycero-3-phosphate. Ca(2+) contacts are provided by H345 and H377. The a 1,2-diacyl-sn-glycero-3-phosphate site is built by Q477 and H615. Residues 610 to 637 (FMVYVHSKLMIVDDTYILIGSANINQRS) form the PLD phosphodiesterase 2 domain. Residues H615, K617, and D622 contribute to the active site. A Ca(2+)-binding site is contributed by E671.

It belongs to the phospholipase D family. C2-PLD subfamily. Ca(2+) is required as a cofactor. In terms of tissue distribution, expressed in roots, leaves, stems, siliques,flowers and inflorescences.

The protein resides in the cell membrane. The catalysed reaction is a 1,2-diacyl-sn-glycero-3-phosphocholine + H2O = a 1,2-diacyl-sn-glycero-3-phosphate + choline + H(+). Functionally, hydrolyzes glycerol-phospholipids at the terminal phosphodiesteric bond to generate phosphatidic acids (PA). Promotes growth and plays a role in nitrogen signaling. This Arabidopsis thaliana (Mouse-ear cress) protein is Phospholipase D alpha 4.